The chain runs to 274 residues: Coiled-coil domain-containing protein 28A (274 aa).

The disordered stretch occupies residues 121 to 166 (VSKSTGFSNPASQSTSQRPKLKRVMKEKTKPQGGEGKGAQSTPIQH). The span at 122 to 138 (SKSTGFSNPASQSTSQR) shows a compositional bias: polar residues. A coiled-coil region spans residues 234 to 263 (KRKTASDSNLDRLLSDLEELNSSIQKLHLA).

This is Coiled-coil domain-containing protein 28A (CCDC28A) from Homo sapiens (Human).